Consider the following 179-residue polypeptide: Large ribosomal subunit protein uL5 (179 aa).

This sequence belongs to the universal ribosomal protein uL5 family. Part of the 50S ribosomal subunit; part of the 5S rRNA/L5/L18/L25 subcomplex. Contacts the 5S rRNA and the P site tRNA. Forms a bridge to the 30S subunit in the 70S ribosome.

Functionally, this is one of the proteins that bind and probably mediate the attachment of the 5S RNA into the large ribosomal subunit, where it forms part of the central protuberance. In the 70S ribosome it contacts protein S13 of the 30S subunit (bridge B1b), connecting the 2 subunits; this bridge is implicated in subunit movement. Contacts the P site tRNA; the 5S rRNA and some of its associated proteins might help stabilize positioning of ribosome-bound tRNAs. In Prochlorococcus marinus (strain NATL2A), this protein is Large ribosomal subunit protein uL5.